The following is a 526-amino-acid chain: Alpha-1,3-mannosyl-glycoprotein 4-beta-N-acetylglucosaminyltransferase A (526 aa).

Residues 1 to 6 (MRLRNG) lie on the Cytoplasmic side of the membrane. A helical; Signal-anchor for type II membrane protein membrane pass occupies residues 7–27 (TVATALVFVTSFLTLSWYTTW). Residues 28 to 63 (QNGKEKLIAYQREFLALKERLRVAEHRISQRSSELN) adopt a coiled-coil conformation. The Lumenal segment spans residues 28–526 (QNGKEKLIAY…NEIHIKKVTS (499 aa)). Residue asparagine 449 is glycosylated (N-linked (GlcNAc...) asparagine). A Phosphoserine modification is found at serine 465.

It belongs to the glycosyltransferase 54 family. A divalent metal cation serves as cofactor. In terms of processing, N-glycosylated.

It is found in the golgi apparatus membrane. The protein resides in the secreted. It carries out the reaction N(4)-{beta-D-GlcNAc-(1-&gt;2)-alpha-D-Man-(1-&gt;3)-[beta-D-GlcNAc-(1-&gt;2)-alpha-D-Man-(1-&gt;6)]-beta-D-Man-(1-&gt;4)-beta-D-GlcNAc-(1-&gt;4)-beta-D-GlcNAc}-L-asparaginyl-[protein] + UDP-N-acetyl-alpha-D-glucosamine = N(4)-{beta-D-GlcNAc-(1-&gt;2)-[beta-D-GlcNAc-(1-&gt;4)]-alpha-D-Man-(1-&gt;3)-[beta-D-GlcNAc-(1-&gt;2)-alpha-D-Man-(1-&gt;6)]-beta-D-Man-(1-&gt;4)-beta-D-GlcNAc-(1-&gt;4)-beta-D-GlcNAc}-L-asparaginyl-[protein] + UDP + H(+). It catalyses the reaction an N(4)-{beta-D-GlcNAc-(1-&gt;2)-alpha-D-Man-(1-&gt;3)-[alpha-D-Man-(1-&gt;6)]-beta-D-Man-(1-&gt;4)-beta-D-GlcNAc-(1-&gt;4)-beta-D-GlcNAc}-L-asparaginyl-[protein] + UDP-N-acetyl-alpha-D-glucosamine = an N(4)-{beta-D-GlcNAc-(1-&gt;2)-[beta-D-GlcNAc-(1-&gt;4)]-alpha-D-Man-(1-&gt;3)-[alpha-D-Man-(1-&gt;6)]-beta-D-Man-(1-&gt;4)-beta-D-GlcNAc-(1-&gt;4)-beta-D-GlcNAc}-L-asparaginyl-[protein] + UDP + H(+). The catalysed reaction is an N(4)-{beta-D-GlcNAc-(1-&gt;2)-alpha-D-Man-(1-&gt;3)-[beta-D-GlcNAc-(1-&gt;2)-[beta-D-GlcNAc-(1-&gt;6)]-alpha-D-Man-(1-&gt;6)]-beta-D-Man-(1-&gt;4)-beta-D-GlcNAc-(1-&gt;4)-beta-D-GlcNAc}-L-asparaginyl-[protein] + UDP-N-acetyl-alpha-D-glucosamine = an N(4)-{beta-D-GlcNAc-(1-&gt;2)-[beta-D-GlcNAc-(1-&gt;4)]-alpha-D-Man-(1-&gt;3)-[beta-D-GlcNAc-(1-&gt;2)-[beta-D-GlcNAc-(1-&gt;6)]-alpha-D-Man-(1-&gt;6)]-beta-D-Man-(1-&gt;4)-beta-D-GlcNAc-(1-&gt;4)-beta-D-GlcNAc}-L-asparaginyl-[protein] + UDP + H(+). The enzyme catalyses an N(4)-{beta-D-GlcNAc-(1-&gt;2)-alpha-D-Man-(1-&gt;3)-[beta-D-GlcNAc-(1-&gt;2)-alpha-D-Man-(1-&gt;6)]-beta-D-Man-(1-&gt;4)-beta-D-GlcNAc-(1-&gt;4)-[alpha-L-Fuc-(1-&gt;6)]-beta-D-GlcNAc}-L-asparaginyl-[protein] + UDP-N-acetyl-alpha-D-glucosamine = N(4)-{beta-D-GlcNAc-(1-&gt;2)-[beta-D-GlcNAc-(1-&gt;4)]-alpha-D-Man-(1-&gt;3)-[beta-D-GlcNAc-(1-&gt;2)-alpha-D-Man-(1-&gt;6)]-beta-D-Man-(1-&gt;4)-beta-D-GlcNAc-(1-&gt;4)-[alpha-L-Fuc-(1-&gt;6)]-beta-D-GlcNAc}-asparaginyl-[protein] + UDP + H(+). It carries out the reaction an N(4)-{beta-D-GlcNAc-(1-&gt;2)-alpha-D-Man-(1-&gt;3)-[beta-D-Gal-(1-&gt;4)-beta-D-GlcNAc-(1-&gt;2)-alpha-D-Man-(1-&gt;6)]-beta-D-Man-(1-&gt;4)-beta-D-GlcNAc-(1-&gt;4)-beta-D-GlcNAc}-L-asparaginyl-[protein] + UDP-N-acetyl-alpha-D-glucosamine = an N(4)-{beta-D-GlcNAc-(1-&gt;2)-[beta-D-GlcNAc-(1-&gt;4)]-alpha-D-Man-(1-&gt;3)-[beta-D-Gal-(1-&gt;4)-beta-D-GlcNAc-(1-&gt;2)-alpha-D-Man-(1-&gt;6)]-beta-D-Man-(1-&gt;4)-beta-D-GlcNAc-(1-&gt;4)-beta-D-GlcNAc}-L-asparaginyl-[protein] + UDP + H(+). It catalyses the reaction N(4)-{beta-D-GlcNAc-(1-&gt;2)-alpha-D-Man-(1-&gt;3)-[alpha-D-Man-(1-&gt;3)-{alpha-D-Man-(1-&gt;6)}-alpha-D-Man-(1-&gt;6)]-beta-D-Man-(1-&gt;4)-beta-D-GlcNAc-(1-&gt;4)-beta-D-GlcNAc}-asparaginyl-[protein] + UDP-N-acetyl-alpha-D-glucosamine = N(4)-{beta-D-GlcNAc-(1-&gt;2)-[beta-D-GlcNAc-(1-&gt;4)]-alpha-D-Man-(1-&gt;3)-[alpha-D-Man-(1-&gt;3)-{alpha-D-Man-(1-&gt;6)}-alpha-D-Man-(1-&gt;6)]-beta-D-Man-(1-&gt;4)-beta-D-GlcNAc-(1-&gt;4)-beta-D-GlcNAc}-asparaginyl-[protein] + UDP + H(+). The catalysed reaction is N(4)-{beta-D-GlcNAc-(1-&gt;2)-alpha-D-Man-(1-&gt;3)-beta-D-Man-(1-&gt;4)-beta-D-GlcNAc-(1-&gt;4)-beta-D-GlcNAc}-asparaginyl-[protein] + UDP-N-acetyl-alpha-D-glucosamine = N(4)-{beta-D-GlcNAc-(1-&gt;2)-[beta-D-GlcNAc-(1-&gt;4)]-alpha-D-Man-(1-&gt;3)-beta-D-Man-(1-&gt;4)-beta-D-GlcNAc-(1-&gt;4)-beta-D-GlcNAc}-asparaginyl-[protein] + UDP + H(+). It functions in the pathway protein modification; protein glycosylation. With respect to regulation, inhibited by UDP. Glycosyltransferase that catalyze the transfer of GlcNAc from UDP-GlcNAc to the GlcNAcbeta1-2Manalpha1-3 arm of the core structure of N-linked glycans through a beta1-4 linkage and participates in the production of tri- and tetra-antennary N-linked sugar chains. Involved in glucose transport by mediating SLC2A2/GLUT2 glycosylation, thereby controlling cell-surface expression of SLC2A2 in pancreatic beta cells. In Rattus norvegicus (Rat), this protein is Alpha-1,3-mannosyl-glycoprotein 4-beta-N-acetylglucosaminyltransferase A.